The chain runs to 940 residues: Alanine--tRNA ligase (940 aa).

4 residues coordinate Zn(2+): H581, H585, C683, and H687.

It belongs to the class-II aminoacyl-tRNA synthetase family. Zn(2+) serves as cofactor.

The protein localises to the cytoplasm. It catalyses the reaction tRNA(Ala) + L-alanine + ATP = L-alanyl-tRNA(Ala) + AMP + diphosphate. Functionally, catalyzes the attachment of alanine to tRNA(Ala) in a two-step reaction: alanine is first activated by ATP to form Ala-AMP and then transferred to the acceptor end of tRNA(Ala). Also edits incorrectly charged Ser-tRNA(Ala) and Gly-tRNA(Ala) via its editing domain. This Leptospira borgpetersenii serovar Hardjo-bovis (strain JB197) protein is Alanine--tRNA ligase.